A 105-amino-acid polypeptide reads, in one-letter code: Small ribosomal subunit protein uS10 (105 aa).

The protein belongs to the universal ribosomal protein uS10 family. Part of the 30S ribosomal subunit.

Functionally, involved in the binding of tRNA to the ribosomes. In Rickettsia conorii (strain ATCC VR-613 / Malish 7), this protein is Small ribosomal subunit protein uS10.